We begin with the raw amino-acid sequence, 220 residues long: Fructose-6-phosphate aldolase (220 aa).

Residue Lys85 is the Schiff-base intermediate with substrate of the active site.

Belongs to the transaldolase family. Type 3A subfamily. Homodecamer.

It localises to the cytoplasm. It carries out the reaction beta-D-fructose 6-phosphate = dihydroxyacetone + D-glyceraldehyde 3-phosphate. Its function is as follows. Catalyzes the reversible formation of fructose 6-phosphate from dihydroxyacetone and D-glyceraldehyde 3-phosphate via an aldolization reaction. The chain is Fructose-6-phosphate aldolase from Salmonella arizonae (strain ATCC BAA-731 / CDC346-86 / RSK2980).